A 101-amino-acid polypeptide reads, in one-letter code: NAD(P)H-quinone oxidoreductase subunit 4L, chloroplastic (101 aa).

3 helical membrane-spanning segments follow: residues 2-22, 32-52, and 61-81; these read MLEY…YGLI, MCLE…SYFF, and IFSI…LAIV.

The protein belongs to the complex I subunit 4L family. As to quaternary structure, NDH is composed of at least 16 different subunits, 5 of which are encoded in the nucleus.

It is found in the plastid. The protein localises to the chloroplast thylakoid membrane. It carries out the reaction a plastoquinone + NADH + (n+1) H(+)(in) = a plastoquinol + NAD(+) + n H(+)(out). The enzyme catalyses a plastoquinone + NADPH + (n+1) H(+)(in) = a plastoquinol + NADP(+) + n H(+)(out). Its function is as follows. NDH shuttles electrons from NAD(P)H:plastoquinone, via FMN and iron-sulfur (Fe-S) centers, to quinones in the photosynthetic chain and possibly in a chloroplast respiratory chain. The immediate electron acceptor for the enzyme in this species is believed to be plastoquinone. Couples the redox reaction to proton translocation, and thus conserves the redox energy in a proton gradient. The chain is NAD(P)H-quinone oxidoreductase subunit 4L, chloroplastic from Ipomoea purpurea (Common morning glory).